The chain runs to 462 residues: NAD-capped RNA hydrolase NUDT12 (462 aa).

3 ANK repeats span residues 11–40, 45–74, and 78–98; these read EIVTQFHCSAAEGDIAKLTGILSHSPSLLN, NGWTALMYAARNGHPEIVQFLLEKGCDRSI, and SRQTALDIAVFWGYKHIANLL. Position 185 is an N6-succinyllysine (Lys185). Positions 284 and 287 each coordinate Zn(2+). At Lys292 the chain carries N6-succinyllysine. Positions 302 and 307 each coordinate Zn(2+). Substrate contacts are provided by residues Tyr318, 354-356, Glu370, Glu374, and Glu415; that span reads AGF. Residues 319–453 form the Nudix hydrolase domain; that stretch reads PRVDPVVIMQ…SRAIAHQLIK (135 aa). The Mg(2+) site is built by Ala354, Glu370, Glu374, and Glu415. Positions 355–376 match the Nudix box motif; sequence GFIEPGETIEDAVRREVEEESG. The Microbody targeting signal motif lies at 460 to 462; the sequence is PNL.

It belongs to the Nudix hydrolase family. NudC subfamily. In terms of assembly, homodimer. Homodimerization is essential for its catalytic activity and protein stability. Interacts (via ANK repeats) with BLMH. Mg(2+) is required as a cofactor. The cofactor is Zn(2+).

It localises to the cytoplasm. It is found in the peroxisome. Its subcellular location is the cytoplasmic granule. The catalysed reaction is a 5'-end NAD(+)-phospho-ribonucleoside in mRNA + H2O = a 5'-end phospho-adenosine-phospho-ribonucleoside in mRNA + beta-nicotinamide D-ribonucleotide + 2 H(+). It carries out the reaction NAD(+) + H2O = beta-nicotinamide D-ribonucleotide + AMP + 2 H(+). It catalyses the reaction NADH + H2O = reduced beta-nicotinamide D-ribonucleotide + AMP + 2 H(+). The enzyme catalyses NADPH + H2O = reduced beta-nicotinamide D-ribonucleotide + adenosine 2',5'-bisphosphate + 2 H(+). Its function is as follows. mRNA decapping enzyme that specifically removes the nicotinamide adenine dinucleotide (NAD) cap from a subset of mRNAs by hydrolyzing the diphosphate linkage to produce nicotinamide mononucleotide (NMN) and 5' monophosphate mRNA. The NAD-cap is present at the 5'-end of some RNAs; in contrast to the canonical N7 methylguanosine (m7G) cap, the NAD cap promotes mRNA decay. Preferentially acts on NAD-capped transcripts in response to nutrient stress. Also acts on free nicotinamide adenine dinucleotide molecules: hydrolyzes NAD(H) into NMN(H) and AMP, and NADPH into NMNH and 2',5'-ADP. May act to regulate the concentration of peroxisomal nicotinamide nucleotide cofactors required for oxidative metabolism in this organelle. Regulates the levels of circadian clock components PER1, PER2, PER3 and CRY2 in the liver. This chain is NAD-capped RNA hydrolase NUDT12, found in Macaca fascicularis (Crab-eating macaque).